Here is a 301-residue protein sequence, read N- to C-terminus: D-psicose 3-epimerase (301 aa).

Tyr-16 is a substrate binding site. Catalysis depends on Glu-162, which acts as the Proton donor/acceptor. Mn(2+) is bound at residue Glu-162. Residues Glu-168 and 195–198 (DTFH) contribute to the substrate site. Mn(2+) is bound by residues Asp-195 and His-221. Arg-227 is a substrate binding site. Glu-256 serves as the catalytic Proton donor/acceptor. A Mn(2+)-binding site is contributed by Glu-256.

It belongs to the hyi family. Homotetramer. Mn(2+) serves as cofactor. It depends on Co(2+) as a cofactor.

The catalysed reaction is D-allulose = keto-D-fructose. With respect to regulation, completely inhibited by EDTA and partially inhibited by Zn(2+), Mg(2+) and Cu(2+). Involved in the biosynthesis of D-psicose. Catalyzes the reversible epimerization of D-fructose at the C3 position to yield D-psicose. The enzyme is highly specific for D-psicose and shows very low activity with D-tagatose. This chain is D-psicose 3-epimerase, found in Enterocloster bolteae (strain ATCC BAA-613 / DSM 15670 / CCUG 46953 / JCM 12243 / WAL 16351) (Clostridium bolteae).